Here is a 223-residue protein sequence, read N- to C-terminus: Ribosomal RNA small subunit methyltransferase G (223 aa).

3 residues coordinate S-adenosyl-L-methionine: glycine 85, phenylalanine 90, and arginine 154.

It belongs to the methyltransferase superfamily. RNA methyltransferase RsmG family.

It is found in the cytoplasm. The catalysed reaction is guanosine(527) in 16S rRNA + S-adenosyl-L-methionine = N(7)-methylguanosine(527) in 16S rRNA + S-adenosyl-L-homocysteine. In terms of biological role, specifically methylates the N7 position of guanine in position 527 of 16S rRNA. The chain is Ribosomal RNA small subunit methyltransferase G from Rhodopseudomonas palustris (strain TIE-1).